The following is a 402-amino-acid chain: Flavohemoprotein (402 aa).

In terms of domain architecture, Globin spans 1–138 (MLSPEVRALV…LADLLIGRER (138 aa)). His-85 serves as a coordination point for heme b. Catalysis depends on charge relay system residues Tyr-95 and Glu-137. Positions 149-402 (GGWTGWRAFK…AEVFGTGGVA (254 aa)) are reductase. Residues 152 to 261 (TGWRAFKVVR…SPPQGDFTLD (110 aa)) form the FAD-binding FR-type domain. FAD contacts are provided by residues Tyr-190 and 206–209 (RQYS). Residue 274–279 (GVGLTP) coordinates NADP(+). FAD is bound at residue 395–398 (VFGT).

Belongs to the globin family. Two-domain flavohemoproteins subfamily. This sequence in the C-terminal section; belongs to the flavoprotein pyridine nucleotide cytochrome reductase family. Heme b serves as cofactor. Requires FAD as cofactor.

The catalysed reaction is 2 nitric oxide + NADPH + 2 O2 = 2 nitrate + NADP(+) + H(+). The enzyme catalyses 2 nitric oxide + NADH + 2 O2 = 2 nitrate + NAD(+) + H(+). Its function is as follows. Is involved in NO detoxification in an aerobic process, termed nitric oxide dioxygenase (NOD) reaction that utilizes O(2) and NAD(P)H to convert NO to nitrate, which protects the bacterium from various noxious nitrogen compounds. Therefore, plays a central role in the inducible response to nitrosative stress. This Bordetella bronchiseptica (strain ATCC BAA-588 / NCTC 13252 / RB50) (Alcaligenes bronchisepticus) protein is Flavohemoprotein.